A 248-amino-acid chain; its full sequence is Mannose-binding protein C (248 aa).

The signal sequence occupies residues 1–20 (MSLIPSLSLLLMSMVAASYS). The region spanning 42 to 99 (GINGFPGKDGRDGTKGEKGEPGQGLRGLQGPPGKLGPPGNPGPSGSPGPKGQKGDPGN) is the Collagen-like domain. The disordered stretch occupies residues 43 to 110 (INGFPGKDGR…PDCDSSLAVS (68 aa)). 4-hydroxyproline is present on proline 47. The segment covering 49-61 (KDGRDGTKGEKGE) has biased composition (basic and acidic residues). Residues proline 73, proline 79, proline 82, and proline 88 each carry the 4-hydroxyproline modification. A compositionally biased stretch (pro residues) spans 75–87 (KLGPPGNPGPSGS). The stretch at 112-130 (RKALQTEMARIKKWLTFSL) forms a coiled coil. In terms of domain architecture, C-type lectin spans 134-245 (VGNKFFLTNG…CSSSHLAVCE (112 aa)). 2 cysteine pairs are disulfide-bonded: cysteine 155/cysteine 244 and cysteine 222/cysteine 236.

Oligomeric complex of 3 or more homotrimers. Interacts with MASP1 and MASP2. Interacts with MEP1A and MEP1B and may inhibit their catalytic activity. Hydroxylation on proline residues within the sequence motif, GXPG, is most likely to be 4-hydroxy as this fits the requirement for 4-hydroxylation in vertebrates.

It is found in the secreted. Functionally, calcium-dependent lectin involved in innate immune defense. Binds mannose, fucose and N-acetylglucosamine on different microorganisms and activates the lectin complement pathway. Binds to late apoptotic cells, as well as to apoptotic blebs and to necrotic cells, but not to early apoptotic cells, facilitating their uptake by macrophages. This chain is Mannose-binding protein C (MBL2), found in Nomascus concolor (Black crested gibbon).